Consider the following 309-residue polypeptide: Probable lipid kinase YegS-like (309 aa).

The 134-residue stretch at 1 to 134 (MAPSHWRLIL…IDLLRIDADH (134 aa)) folds into the DAGKc domain. Residues T39, 65–71 (GDGTLSE), and T96 each bind ATP. The Mg(2+) site is built by L219, D222, and L224. E280 functions as the Proton acceptor in the catalytic mechanism.

The protein belongs to the diacylglycerol/lipid kinase family. YegS lipid kinase subfamily. Mg(2+) is required as a cofactor. The cofactor is Ca(2+).

It is found in the cytoplasm. Its function is as follows. Probably phosphorylates lipids; the in vivo substrate is unknown. This chain is Probable lipid kinase YegS-like, found in Xanthomonas campestris pv. campestris (strain 8004).